A 326-amino-acid polypeptide reads, in one-letter code: MNRHADVPVIDISGLSGNDMDVKKDIAARIDRACRGSGFFYAANHGVDLAALQKFTTDWHMAMSAEEKWELAIRAYNPANPRNRNGYYMAVEGKKANESFCYLNPSFDADHATIKAGLPSHEVNIWPDEARHPGMRRFYEAYFSDVFDVAAVILRGFAIALGREESFFERHFSMDDTLSAVSLIRYPFLENYPPLKLGPDGEKLSFEHHQDVSLITVLYQTAIPNLQVETAEGYLDIPVSDEHFLVNCGTYMAHITNGYYPAPVHRVKYINAERLSIPFFANLSHASAIDPFAPPPYAPPGGNPTVSYGDYLQHGLLDLIRANGQT.

Residues Arg-84, Tyr-88, and Tyr-186 each contribute to the isopenicillin N site. N-[(5S)-5-amino-5-carboxypentanoyl]-L-cysteinyl-D-valine is bound by residues Arg-84, Tyr-88, Tyr-186, His-209, and Asp-211. Positions 183 to 283 (LIRYPFLENY…RLSIPFFANL (101 aa)) constitute a Fe2OG dioxygenase domain. Residues His-209, Asp-211, and His-265 each contribute to the Fe(2+) site. Residue Arg-274 participates in 2-oxoglutarate binding. Ser-276 is a binding site for isopenicillin N. Residue Ser-276 coordinates N-[(5S)-5-amino-5-carboxypentanoyl]-L-cysteinyl-D-valine.

This sequence belongs to the iron/ascorbate-dependent oxidoreductase family. Fe cation is required as a cofactor. The cofactor is L-ascorbate.

The enzyme catalyses N-[(5S)-5-amino-5-carboxypentanoyl]-L-cysteinyl-D-valine + O2 = isopenicillin N + 2 H2O. It participates in antibiotic biosynthesis; penicillin G biosynthesis; penicillin G from L-alpha-aminoadipate and L-cysteine and L-valine: step 2/3. In terms of biological role, removes, in the presence of oxygen, 4 hydrogen atoms from delta-L-(alpha-aminoadipyl)-L-cysteinyl-D-valine (ACV) to form the azetidinone and thiazolidine rings of isopenicillin. The polypeptide is Isopenicillin N synthase (pcbC) (Flavobacterium sp. (strain SC 12,154)).